The primary structure comprises 379 residues: Zinc metalloproteinase nas-20 (379 aa).

The first 20 residues, M1–S20, serve as a signal peptide directing secretion. A propeptide spanning residues D21–R29 is cleaved from the precursor. The 179-residue stretch at Q30–N208 folds into the Peptidase M12A domain. A glycan (N-linked (GlcNAc...) asparagine) is linked at N67. Cystine bridges form between C70-C207, C91-C111, C209-C229, and C234-C243. Residue H119 participates in Zn(2+) binding. E120 is a catalytic residue. H123 and H129 together coordinate Zn(2+). An N-linked (GlcNAc...) asparagine glycan is attached at N185. Residues K203 to D244 enclose the EGF-like domain. N337 and N370 each carry an N-linked (GlcNAc...) asparagine glycan.

Zn(2+) is required as a cofactor.

The protein resides in the secreted. In terms of biological role, metalloprotease. This chain is Zinc metalloproteinase nas-20 (nas-20), found in Caenorhabditis elegans.